The primary structure comprises 412 residues: Phosphoglycerate kinase (412 aa).

Residues 22–24 (DFN), Arg37, 60–63 (HLGK), Arg120, and Arg172 contribute to the substrate site. Residues Lys223, Gly310, Glu341, and 368–371 (GGDS) contribute to the ATP site.

It belongs to the phosphoglycerate kinase family. In terms of assembly, monomer.

The protein localises to the cytoplasm. The enzyme catalyses (2R)-3-phosphoglycerate + ATP = (2R)-3-phospho-glyceroyl phosphate + ADP. The protein operates within carbohydrate degradation; glycolysis; pyruvate from D-glyceraldehyde 3-phosphate: step 2/5. In Spiroplasma citri, this protein is Phosphoglycerate kinase.